The chain runs to 561 residues: Embryonal Fyn-associated substrate (561 aa).

The SH3 domain maps to 5-68; it reads TSTQLARALY…PANRVKLLPA (64 aa). 4 disordered regions span residues 68 to 123, 171 to 215, 240 to 372, and 390 to 422; these read AGPA…CPPS, HPLT…PGPP, LADG…HNEY, and DKAQ…ALSP. Over residues 103-123 the composition is skewed to pro residues; sequence VPPPARPCPTSGPPAGPCPPS. At tyrosine 253 the chain carries Phosphotyrosine; by SRC. 2 short sequence motifs (SH3-binding) span residues 305–311 and 335–341; these read RPLPALP and RPLPPPP. Positions 308-325 are enriched in pro residues; the sequence is PALPVPEAPSPSPVPSPA. Over residues 352-372 the composition is skewed to basic and acidic residues; that stretch reads VEGDPEGREMEDDPAGHHNEY. Residues 438–488 form a divergent helix-loop-helix motif region; it reads FYAGQCQSHYSALQAAVAALMSSTQANQPPRLFVPHSKRVVVAAHRLVFVG.

It belongs to the CAS family. Phosphorylated on multiple tyrosine residues. Phosphorylated on tyrosines by FYN and SRC. In terms of tissue distribution, the protein has been detected in lung and placenta.

Docking protein which plays a central coordinating role for tyrosine-kinase-based signaling related to cell adhesion. May serve as an activator of SRC and a downstream effector. Interacts with the SH3 domain of FYN and with CRK, SRC, and YES. This chain is Embryonal Fyn-associated substrate (EFS), found in Homo sapiens (Human).